The sequence spans 179 residues: Large ribosomal subunit protein uL5 (179 aa).

Belongs to the universal ribosomal protein uL5 family. In terms of assembly, part of the 50S ribosomal subunit; part of the 5S rRNA/L5/L18/L25 subcomplex. Contacts the 5S rRNA and the P site tRNA. Forms a bridge to the 30S subunit in the 70S ribosome.

This is one of the proteins that bind and probably mediate the attachment of the 5S RNA into the large ribosomal subunit, where it forms part of the central protuberance. In the 70S ribosome it contacts protein S13 of the 30S subunit (bridge B1b), connecting the 2 subunits; this bridge is implicated in subunit movement. Contacts the P site tRNA; the 5S rRNA and some of its associated proteins might help stabilize positioning of ribosome-bound tRNAs. The polypeptide is Large ribosomal subunit protein uL5 (Idiomarina loihiensis (strain ATCC BAA-735 / DSM 15497 / L2-TR)).